Consider the following 389-residue polypeptide: Na(+)/H(+) antiporter NhaA (389 aa).

The next 11 helical transmembrane spans lie at Ile24 to Ala44, Leu56 to Leu76, Leu94 to Leu114, Ala122 to Leu142, Val152 to Phe172, Gln176 to Asn196, Phe216 to Ile236, Pro259 to Ser279, Leu291 to Val311, Trp326 to Ile346, and Met363 to Phe383.

The protein belongs to the NhaA Na(+)/H(+) (TC 2.A.33) antiporter family.

It localises to the cell inner membrane. The enzyme catalyses Na(+)(in) + 2 H(+)(out) = Na(+)(out) + 2 H(+)(in). Functionally, na(+)/H(+) antiporter that extrudes sodium in exchange for external protons. The protein is Na(+)/H(+) antiporter NhaA of Dechloromonas aromatica (strain RCB).